The chain runs to 313 residues: Ribosomal RNA small subunit methyltransferase H (313 aa).

S-adenosyl-L-methionine contacts are provided by residues 31–33, Asp51, Phe77, Asp95, and Gln102; that span reads GGH.

Belongs to the methyltransferase superfamily. RsmH family.

The protein resides in the cytoplasm. It carries out the reaction cytidine(1402) in 16S rRNA + S-adenosyl-L-methionine = N(4)-methylcytidine(1402) in 16S rRNA + S-adenosyl-L-homocysteine + H(+). In terms of biological role, specifically methylates the N4 position of cytidine in position 1402 (C1402) of 16S rRNA. This chain is Ribosomal RNA small subunit methyltransferase H, found in Xylella fastidiosa (strain M23).